The chain runs to 243 residues: 3-deoxy-manno-octulosonate cytidylyltransferase (243 aa).

The protein belongs to the KdsB family.

Its subcellular location is the cytoplasm. The catalysed reaction is 3-deoxy-alpha-D-manno-oct-2-ulosonate + CTP = CMP-3-deoxy-beta-D-manno-octulosonate + diphosphate. It functions in the pathway nucleotide-sugar biosynthesis; CMP-3-deoxy-D-manno-octulosonate biosynthesis; CMP-3-deoxy-D-manno-octulosonate from 3-deoxy-D-manno-octulosonate and CTP: step 1/1. The protein operates within bacterial outer membrane biogenesis; lipopolysaccharide biosynthesis. In terms of biological role, activates KDO (a required 8-carbon sugar) for incorporation into bacterial lipopolysaccharide in Gram-negative bacteria. This is 3-deoxy-manno-octulosonate cytidylyltransferase from Helicobacter pylori (strain ATCC 700392 / 26695) (Campylobacter pylori).